The chain runs to 193 residues: Potassium-transporting ATPase KdpC subunit (193 aa).

A helical transmembrane segment spans residues 11–31; that stretch reads FTLVFMVLLGLVYPFVMTGIA.

The protein belongs to the KdpC family. As to quaternary structure, the system is composed of three essential subunits: KdpA, KdpB and KdpC.

It localises to the cell membrane. Functionally, part of the high-affinity ATP-driven potassium transport (or Kdp) system, which catalyzes the hydrolysis of ATP coupled with the electrogenic transport of potassium into the cytoplasm. This subunit acts as a catalytic chaperone that increases the ATP-binding affinity of the ATP-hydrolyzing subunit KdpB by the formation of a transient KdpB/KdpC/ATP ternary complex. The sequence is that of Potassium-transporting ATPase KdpC subunit from Caldanaerobacter subterraneus subsp. tengcongensis (strain DSM 15242 / JCM 11007 / NBRC 100824 / MB4) (Thermoanaerobacter tengcongensis).